The chain runs to 281 residues: Very-long-chain (3R)-3-hydroxyacyl-CoA dehydratase 1 (281 aa).

At 1 to 68 (MGKGDWRQGR…RRLGLLATAW (68 aa)) the chain is on the cytoplasmic side. A helical membrane pass occupies residues 69 to 88 (LTFYNIAMTAGWLVLAIAMV). At 89–107 (RFYMEKGTHRGLYKSIQKT) the chain is on the lumenal side. Residues 108–124 (LKFFQTFALLEVVHCLI) traverse the membrane as a helical segment. The Cytoplasmic segment spans residues 125–134 (GIVPTSVLVT). The chain crosses the membrane as a helical span at residues 135–152 (GVQVSSRIFMVWLITHSI). Residues 153-158 (KPIQNE) lie on the Lumenal side of the membrane. Residues 159 to 173 (ESVVLFLVSWTVTEI) traverse the membrane as a helical segment. The Cytoplasmic portion of the chain corresponds to 174–196 (TRYSFYTFSLLDHLPHFIKWARY). A helical transmembrane segment spans residues 197–214 (NLFIILYPVGVAGELLTI). Active-site residues include tyrosine 203 and glutamate 210. Topologically, residues 215–244 (YAALPYVKKSGMFSVRLPNKYNVSFDYYYF) are lumenal. Residue asparagine 236 is glycosylated (N-linked (GlcNAc...) asparagine). Residues 245 to 262 (LLITMASYIPLFPQLYFH) traverse the membrane as a helical segment. Topologically, residues 263 to 281 (MLRQRRKVLHGEVIAEKDD) are cytoplasmic.

The protein belongs to the very long-chain fatty acids dehydratase HACD family. As to quaternary structure, may interact with enzymes of the ELO family (including ELOVL1); with those enzymes that mediate condensation, the first of the four steps of the reaction cycle responsible for fatty acids elongation, may be part of a larger fatty acids elongase complex. Interacts with TECR. Post-translationally, N-glycosylated. As to expression, expressed at high levels in heart, skeletal muscle and testis, weak expression in kidney and liver.

It localises to the endoplasmic reticulum membrane. The catalysed reaction is a very-long-chain (3R)-3-hydroxyacyl-CoA = a very-long-chain (2E)-enoyl-CoA + H2O. The enzyme catalyses (3R)-hydroxyhexadecanoyl-CoA = (2E)-hexadecenoyl-CoA + H2O. It catalyses the reaction (3R)-hydroxyoctadecanoyl-CoA = (2E)-octadecenoyl-CoA + H2O. It carries out the reaction (3R)-hydroxyeicosanoyl-CoA = (2E)-eicosenoyl-CoA + H2O. The catalysed reaction is (3R)-hydroxydocosanoyl-CoA = (2E)-docosenoyl-CoA + H2O. The enzyme catalyses (3R)-hydroxytetracosanoyl-CoA = (2E)-tetracosenoyl-CoA + H2O. It catalyses the reaction (3R)-hydroxyhexacosanoyl-CoA = (2E)-hexacosenoyl-CoA + H2O. It participates in lipid metabolism; fatty acid biosynthesis. This is Very-long-chain (3R)-3-hydroxyacyl-CoA dehydratase 1 from Mus musculus (Mouse).